An 89-amino-acid chain; its full sequence is Dynein light chain 2, cytoplasmic (89 aa).

This sequence belongs to the dynein light chain family.

Its subcellular location is the cytoplasm. It localises to the cytoskeleton. Acts as a non-catalytic accessory component of a dynein complex. This chain is Dynein light chain 2, cytoplasmic (Cdlc2), found in Drosophila melanogaster (Fruit fly).